The primary structure comprises 417 residues: Inner membrane transport protein YnfM (417 aa).

The segment at 1-22 (MSRTTTVDGAPASDTDKQSISQ) is disordered. The Periplasmic portion of the chain corresponds to 1–38 (MSRTTTVDGAPASDTDKQSISQPNQFIKRGTPQFMRVT). A helical transmembrane segment spans residues 39-59 (LALFSAGLATFALLYCVQPIL). Residues 60-73 (PVLSQEFGLTPANS) are Cytoplasmic-facing. Residues 74–94 (SISLSISTAMLAIGLLFTGPL) traverse the membrane as a helical segment. Residues 95-101 (SDAIGRK) lie on the Periplasmic side of the membrane. A helical transmembrane segment spans residues 102 to 122 (PVMVTALLLASICTLLSTMMT). Residues 123–125 (SWH) are Cytoplasmic-facing. Residues 126-146 (GILIMRALIGLSLSGVAAVGM) traverse the membrane as a helical segment. At 147 to 152 (TYLSEE) the chain is on the periplasmic side. The helical transmembrane segment at 153–173 (IHPSFVAFSMGLYISGNSIGG) threads the bilayer. At 174–190 (MSGRLISGVFTDFFNWR) the chain is on the cytoplasmic side. The chain crosses the membrane as a helical span at residues 191–211 (IALAAIGCFALASALMFWKIL). The Periplasmic portion of the chain corresponds to 212–241 (PESRHFRPTSLRPKTLFINFRLHWRDRGLP). A helical transmembrane segment spans residues 242 to 262 (LLFAEGFLLMGSFVTLFNYIG). The Cytoplasmic segment spans residues 263–264 (YR). A helical transmembrane segment spans residues 265-285 (LMLSPWHVSQAVVGLLSLAYL). Over 286–315 (TGTWSSPKAGTMTTRYGRGPVMLFSTGVML) the chain is Periplasmic. Residues 316–336 (FGLLMTLFSSLWLIFAGMLLF) form a helical membrane-spanning segment. The Cytoplasmic segment spans residues 337–364 (SAGFFAAHSVASSWIGPRAKRAKGQASS). The helical transmembrane segment at 365–385 (LYLFSYYLGSSIAGTLGGVFW) threads the bilayer. Topologically, residues 386 to 387 (HN) are periplasmic. A helical membrane pass occupies residues 388–408 (YGWNGVGAFIALMLVIALLVG). Residues 409 to 417 (TRLHRRLHA) lie on the Cytoplasmic side of the membrane.

It belongs to the major facilitator superfamily.

Its subcellular location is the cell inner membrane. The protein is Inner membrane transport protein YnfM (ynfM) of Escherichia coli (strain K12).